A 193-amino-acid chain; its full sequence is uncharacterized protein (193 aa).

Disordered stretches follow at residues 1–67 (MSGP…GPRS) and 110–160 (QRTP…LPGS). Low complexity-rich tracts occupy residues 50-64 (GPQR…ARPG) and 148-160 (AGAS…LPGS).

This is an uncharacterized protein from Homo sapiens (Human).